Consider the following 272-residue polypeptide: Proteasome subunit beta type-5 (272 aa).

A propeptide spans 1-62 (removed in mature form); sequence MINIDFDNIE…APKALEFAHG (62 aa). Thr63 serves as the catalytic Nucleophile.

The protein belongs to the peptidase T1B family. As to quaternary structure, the 26S proteasome consists of a 20S proteasome core and two 19S regulatory subunits. The 20S proteasome core is composed of 28 subunits that are arranged in four stacked rings, resulting in a barrel-shaped structure. The two end rings are each formed by seven alpha subunits, and the two central rings are each formed by seven beta subunits. The catalytic chamber with the active sites is on the inside of the barrel.

It is found in the cytoplasm. The protein localises to the nucleus. The enzyme catalyses Cleavage of peptide bonds with very broad specificity.. In terms of biological role, the proteasome is a multicatalytic proteinase complex which is characterized by its ability to cleave peptides with Arg, Phe, Tyr, Leu, and Glu adjacent to the leaving group at neutral or slightly basic pH. The proteasome has an ATP-dependent proteolytic activity. The protein is Proteasome subunit beta type-5 (psmB5) of Dictyostelium discoideum (Social amoeba).